The primary structure comprises 361 residues: Phenylalanine--tRNA ligase alpha subunit (361 aa).

Mg(2+) is bound at residue Glu260.

It belongs to the class-II aminoacyl-tRNA synthetase family. Phe-tRNA synthetase alpha subunit type 1 subfamily. Tetramer of two alpha and two beta subunits. The cofactor is Mg(2+).

It is found in the cytoplasm. The catalysed reaction is tRNA(Phe) + L-phenylalanine + ATP = L-phenylalanyl-tRNA(Phe) + AMP + diphosphate + H(+). The polypeptide is Phenylalanine--tRNA ligase alpha subunit (Bartonella quintana (strain Toulouse) (Rochalimaea quintana)).